The sequence spans 159 residues: MQCPTCQNTDSRVLESRSADSGKSVRRRRECLNCSFRFTTYERVESMPVSVLKKDGSRELFDKQKLFTGISRACEKTNFSSEAIINFVDGIESQIVQDTNKDIKSSQIGELILKNLRKENEVAYIRYASVYRKFNGVKDFISTLESLKGSSKNQLASIS.

Over residues 1-11 the composition is skewed to polar residues; that stretch reads MQCPTCQNTDS. Positions 1–21 are disordered; that stretch reads MQCPTCQNTDSRVLESRSADS. Residues 3–34 fold into a zinc finger; that stretch reads CPTCQNTDSRVLESRSADSGKSVRRRRECLNC. The ATP-cone domain occupies 49–139; the sequence is VSVLKKDGSR…VYRKFNGVKD (91 aa).

Belongs to the NrdR family. Zn(2+) serves as cofactor.

In terms of biological role, negatively regulates transcription of bacterial ribonucleotide reductase nrd genes and operons by binding to NrdR-boxes. This Prochlorococcus marinus (strain MIT 9301) protein is Transcriptional repressor NrdR.